Here is a 161-residue protein sequence, read N- to C-terminus: MTRLLVVYFLISALLVGLDQWSKYLTVQNISLGETKEFIPGFLSLTHLRNTGAAWSLLEGKMIFFYVITVIVSVVIIYLLIKNYKKSIWYSVGLSFVLAGAIGNFIDRVRLGYVVDMLQTDFMNFPIFNVADSTLVVGVICIFIYLILDEKAAKEGKNGTN.

A run of 3 helical transmembrane segments spans residues 4–24 (LLVV…WSKY), 61–81 (KMIF…YLLI), and 87–107 (SIWY…NFID). Active-site residues include aspartate 116 and aspartate 132. Residues 127–147 (IFNVADSTLVVGVICIFIYLI) traverse the membrane as a helical segment.

The protein belongs to the peptidase A8 family.

Its subcellular location is the cell membrane. It catalyses the reaction Release of signal peptides from bacterial membrane prolipoproteins. Hydrolyzes -Xaa-Yaa-Zaa-|-(S,diacylglyceryl)Cys-, in which Xaa is hydrophobic (preferably Leu), and Yaa (Ala or Ser) and Zaa (Gly or Ala) have small, neutral side chains.. Its pathway is protein modification; lipoprotein biosynthesis (signal peptide cleavage). This protein specifically catalyzes the removal of signal peptides from prolipoproteins. This Enterococcus faecalis (strain ATCC 700802 / V583) protein is Lipoprotein signal peptidase.